Reading from the N-terminus, the 318-residue chain is Nitrate reductase [NADH] (318 aa).

The 76-residue stretch at 216–291 (AKSFTMAEVE…LLEYYIGELA (76 aa)) folds into the Cytochrome b5 heme-binding domain. Heme is bound by residues H251 and H274.

Belongs to the nitrate reductase family. Homodimer. It depends on FAD as a cofactor. Heme serves as cofactor. Requires Mo-molybdopterin as cofactor.

It catalyses the reaction nitrite + NAD(+) + H2O = nitrate + NADH + H(+). Its function is as follows. Nitrate reductase is a key enzyme involved in the first step of nitrate assimilation in plants, fungi and bacteria. The protein is Nitrate reductase [NADH] of Chlorella vulgaris (Green alga).